The sequence spans 216 residues: ATP-dependent Clp protease proteolytic subunit (216 aa).

Serine 109 acts as the Nucleophile in catalysis. Histidine 134 is a catalytic residue.

The protein belongs to the peptidase S14 family. As to quaternary structure, fourteen ClpP subunits assemble into 2 heptameric rings which stack back to back to give a disk-like structure with a central cavity, resembling the structure of eukaryotic proteasomes.

The protein resides in the cytoplasm. The enzyme catalyses Hydrolysis of proteins to small peptides in the presence of ATP and magnesium. alpha-casein is the usual test substrate. In the absence of ATP, only oligopeptides shorter than five residues are hydrolyzed (such as succinyl-Leu-Tyr-|-NHMec, and Leu-Tyr-Leu-|-Tyr-Trp, in which cleavage of the -Tyr-|-Leu- and -Tyr-|-Trp bonds also occurs).. Its function is as follows. Cleaves peptides in various proteins in a process that requires ATP hydrolysis. Has a chymotrypsin-like activity. Plays a major role in the degradation of misfolded proteins. This is ATP-dependent Clp protease proteolytic subunit from Rhodospirillum rubrum (strain ATCC 11170 / ATH 1.1.1 / DSM 467 / LMG 4362 / NCIMB 8255 / S1).